A 272-amino-acid polypeptide reads, in one-letter code: Small ribosomal subunit protein mS23 (272 aa).

The disordered stretch occupies residues 236–272 (AGATGGAKEESDPAILPELEVAESTSESAQPAEIRTG).

Belongs to the mitochondrion-specific ribosomal protein mS23 family. In terms of assembly, component of the mitochondrial small ribosomal subunit.

The protein resides in the mitochondrion. This is Small ribosomal subunit protein mS23 (RSM25) from Coccidioides immitis (strain RS) (Valley fever fungus).